A 750-amino-acid polypeptide reads, in one-letter code: Photosystem I P700 chlorophyll a apoprotein A1 (750 aa).

A run of 8 helical transmembrane segments spans residues valine 70 to alanine 93, leucine 156 to histidine 179, leucine 195 to leucine 219, isoleucine 291 to tyrosine 309, tryptophan 346 to tyrosine 369, leucine 385 to valine 411, alanine 433 to histidine 455, and phenylalanine 531 to leucine 549. [4Fe-4S] cluster-binding residues include cysteine 573 and cysteine 582. The next 2 helical transmembrane spans lie at histidine 589–tryptophan 610 and leucine 664–phenylalanine 686. Histidine 675 contacts chlorophyll a'. Residues methionine 683 and tyrosine 691 each coordinate chlorophyll a. Position 692 (tryptophan 692) interacts with phylloquinone. Residues alanine 724–alanine 744 traverse the membrane as a helical segment.

Belongs to the PsaA/PsaB family. In terms of assembly, the PsaA/B heterodimer binds the P700 chlorophyll special pair and subsequent electron acceptors. PSI consists of a core antenna complex that captures photons, and an electron transfer chain that converts photonic excitation into a charge separation. The eukaryotic PSI reaction center is composed of at least 11 subunits. P700 is a chlorophyll a/chlorophyll a' dimer, A0 is one or more chlorophyll a, A1 is one or both phylloquinones and FX is a shared 4Fe-4S iron-sulfur center. is required as a cofactor.

The protein localises to the plastid. Its subcellular location is the chloroplast thylakoid membrane. It carries out the reaction reduced [plastocyanin] + hnu + oxidized [2Fe-2S]-[ferredoxin] = oxidized [plastocyanin] + reduced [2Fe-2S]-[ferredoxin]. PsaA and PsaB bind P700, the primary electron donor of photosystem I (PSI), as well as the electron acceptors A0, A1 and FX. PSI is a plastocyanin-ferredoxin oxidoreductase, converting photonic excitation into a charge separation, which transfers an electron from the donor P700 chlorophyll pair to the spectroscopically characterized acceptors A0, A1, FX, FA and FB in turn. Oxidized P700 is reduced on the lumenal side of the thylakoid membrane by plastocyanin. In Atropa belladonna (Belladonna), this protein is Photosystem I P700 chlorophyll a apoprotein A1.